A 129-amino-acid chain; its full sequence is Follitropin subunit beta (129 aa).

The N-terminal stretch at 1–19 (MKSVQFCFLFCCWRAICCR) is a signal peptide. 6 cysteine pairs are disulfide-bonded: C21–C69, C35–C84, C38–C122, C46–C100, C50–C102, and C105–C112. N-linked (GlcNAc...) asparagine glycosylation is found at N25 and N42.

Belongs to the glycoprotein hormones subunit beta family. As to quaternary structure, heterodimer. The active follitropin is a heterodimer composed of an alpha chain/CGA shared with other hormones and a unique beta chain/FSHB shown here.

It localises to the secreted. Its function is as follows. Together with the alpha chain CGA constitutes follitropin, the follicle-stimulating hormone, and provides its biological specificity to the hormone heterodimer. Binds FSHR, a G protein-coupled receptor, on target cells to activate downstream signaling pathways. Follitropin is involved in follicle development and spermatogenesis in reproductive organs. The polypeptide is Follitropin subunit beta (FSHB) (Ovis aries (Sheep)).